We begin with the raw amino-acid sequence, 512 residues long: SNF1-related protein kinase catalytic subunit alpha KIN11 (512 aa).

Positions 20 to 272 (YKLGKTLGIG…IPEIRQHRWF (253 aa)) constitute a Protein kinase domain. ATP-binding positions include 26–34 (LGIGSFGKV) and lysine 49. Aspartate 143 functions as the Proton acceptor in the catalytic mechanism. Serine 165 is modified (phosphoserine). Phosphothreonine; by GRIK1 or GRIK2 is present on threonine 176. Residues 291–391 (AKKINEEIVQ…GARSQVPVDR (101 aa)) are auto-inhibitory domain (AID). Residues 293-333 (KINEEIVQEVVNMGFDRNQVLESLRNRTQNDATVTYYLLLD) enclose the UBA domain. The interval 295-512 (NEEIVQEVVN…AAFLTELRVI (218 aa)) is regulatory domain (RD). The tract at residues 392–512 (KWALGLQSHA…AAFLTELRVI (121 aa)) is PPI. The interval 399–512 (SHAHPREIMN…AAFLTELRVI (114 aa)) is interaction with PAD1 and SKP1. A KA1 domain is found at 463–511 (AMTSPTVIKFELQLYKAREEKYLLDIQRVNGPQFLFLDLCAAFLTELRV).

Belongs to the protein kinase superfamily. CAMK Ser/Thr protein kinase family. SNF1 subfamily. Subunit of a probable heterotrimeric complex consisting of an alpha catalytic (KIN10 or KIN11) subunit, and a beta (KINB) and a gamma (KING or SNF4) non-catalytic regulatory subunits. Interacts with KINB2, KINB3, SNF4 and probably with KINB1 and KING1. Interacts with SKP1/ASK1, PAD1 and the N-terminus of PRL1. Potential subunit of a SCF ubiquitin ligase complex consisting of a SNF1-related protein kinase, SKP1 and CUL1. The association of the SCF complex with the proteasome may be mediated by PAD1 and seems to be inhibited by the interaction with PRL1. Interacts with DSP4. Interacts with the begomovirus AL2 protein and the curtovirus L2 protein. Interacts with ATAF1. Interacts with CIPK14. Interacts with FLZ proteins through their FLZ-type zinc finger domains. Interacts with GEBP/STKR1. Interacts with REM4.1 and REM4.2. Interacts with ADK2. Interacts with IDD8. Interacts with FLZ3, FLZ9, TCP3, TCP13, HB21/ZHD3 and HB23/ZHD10. Interacts with WRI1. Interacts with IPK2b. Interacts with FLZ6 and FLZ10. Post-translationally, sumoylated by SIZ1. In terms of processing, phosphorylated at Thr-176 under submergence. Autophosphorylated. Phosphorylated at Thr-176 by GRIK1/SNAK2 and GRIK2/SNAK1. In terms of tissue distribution, expressed in roots, shoots, flower buds, flowers, siliques and leaves. Restrictly expressed to the base of the leaf, the vascular tissue, and the hydathodes.

It localises to the plastid. The protein resides in the chloroplast. Its subcellular location is the cytoplasm. The protein localises to the endoplasmic reticulum. The catalysed reaction is L-seryl-[protein] + ATP = O-phospho-L-seryl-[protein] + ADP + H(+). It catalyses the reaction L-threonyl-[protein] + ATP = O-phospho-L-threonyl-[protein] + ADP + H(+). Inactivated by the begomovirus AL2 protein or the curtovirus L2 protein. Activated by phosphorylation at Thr-176 by GRIK1/SNAK2 and GRIK2/SNAK1. Inhibited by trehalose-6-phosphate. In terms of biological role, catalytic subunit of the probable trimeric SNF1-related protein kinase (SnRK) complex, a central regulator of cellular energy homeostasis, which, in response to seemingly unrelated darkness, sugar and stress conditions, activates energy-producing pathways and inhibits energy-consuming processes. May play a role in a signal transduction cascade regulating gene expression and carbohydrate metabolism in higher plants. The SnRK complex may also be involved in the regulation of fatty acid synthesis by phosphorylation of acetyl-CoA carboxylase and in assimilation of nitrogen by phosphorylating nitrate reductase. In vitro, KIN11 exhibits kinase activity on sucrose phosphate synthase and the kinase activity is inhibited by PRL1. May be a subunit of a SCF ubiquitin ligase complex and thus be involved in proteasomal ubiquitination. Involved in innate antiviral defenses. Phosphorylates REM4.1 in vitro. Phosphorylates ADK2 in vitro. This Arabidopsis thaliana (Mouse-ear cress) protein is SNF1-related protein kinase catalytic subunit alpha KIN11.